A 219-amino-acid chain; its full sequence is Proteasome subunit beta type-9 (219 aa).

A propeptide spans 1 to 20 (MLRAGAPTAGSFRTEEVHTG) (removed in mature form). T21 serves as the catalytic Nucleophile. N6-acetyllysine occurs at positions 53 and 109.

The protein belongs to the peptidase T1B family. As to quaternary structure, the 26S proteasome consists of a 20S proteasome core and two 19S regulatory subunits. The 20S proteasome core is composed of 28 subunits that are arranged in four stacked rings, resulting in a barrel-shaped structure. The two end rings are each formed by seven alpha subunits, and the two central rings are each formed by seven beta subunits. The catalytic chamber with the active sites is on the inside of the barrel. Component of the immunoproteasome, where it displaces the equivalent housekeeping subunit PSMB6. Component of the spermatoproteasome, a form of the proteasome specifically found in testis. In terms of processing, autocleaved. The resulting N-terminal Thr residue of the mature subunit is responsible for the nucleophile proteolytic activity.

Its subcellular location is the cytoplasm. It localises to the nucleus. It catalyses the reaction Cleavage of peptide bonds with very broad specificity.. Functionally, the proteasome is a multicatalytic proteinase complex which is characterized by its ability to cleave peptides with Arg, Phe, Tyr, Leu, and Glu adjacent to the leaving group at neutral or slightly basic pH. The proteasome has an ATP-dependent proteolytic activity. This subunit is involved in antigen processing to generate class I binding peptides. The polypeptide is Proteasome subunit beta type-9 (Psmb9) (Mus spicilegus (Steppe mouse)).